A 298-amino-acid polypeptide reads, in one-letter code: uncharacterized protein (298 aa).

10 consecutive transmembrane segments (helical) span residues 5–25, 36–56, 76–96, 97–117, 124–144, 147–167, 181–201, 216–236, 244–264, and 272–292; these read ILFG…MSAF, MENV…IYPF, VVVG…ISLA, TATA…PLLL, STLI…DPSV, VGPV…LAYI, VILA…FIDI, ILWI…LTYA, IIAP…LYLG, and SSLG…PALL. The region spanning 17-141 is the EamA 1 domain; it reads LCFGIMSAFV…GIVGVVLISD (125 aa). The region spanning 183-288 is the EamA 2 domain; sequence LAFAFGMSLL…ILCSGLLIAL (106 aa).

This sequence belongs to the EamA transporter family.

It localises to the cell membrane. This is an uncharacterized protein from Helicobacter pylori (strain ATCC 700392 / 26695) (Campylobacter pylori).